Here is a 547-residue protein sequence, read N- to C-terminus: CTP synthase (547 aa).

Positions 1–265 (MTKFVFVTGG…DRIVCEKLAL (265 aa)) are amidoligase domain. Ser-13 is a binding site for CTP. Residue Ser-13 participates in UTP binding. Residues 14–19 (SLGKGI) and Asp-71 contribute to the ATP site. Mg(2+) contacts are provided by Asp-71 and Glu-139. CTP contacts are provided by residues 146-148 (DIE), 186-191 (KTKPTQ), and Lys-222. UTP contacts are provided by residues 186–191 (KTKPTQ) and Lys-222. Residues 290–542 (TIGMVGKYVD…IKAALAHKHA (253 aa)) form the Glutamine amidotransferase type-1 domain. Residue Gly-351 participates in L-glutamine binding. Catalysis depends on Cys-378, which acts as the Nucleophile; for glutamine hydrolysis. L-glutamine-binding positions include 379-382 (LGMQ), Glu-402, and Arg-468. Active-site residues include His-515 and Glu-517.

The protein belongs to the CTP synthase family. Homotetramer.

The catalysed reaction is UTP + L-glutamine + ATP + H2O = CTP + L-glutamate + ADP + phosphate + 2 H(+). It catalyses the reaction L-glutamine + H2O = L-glutamate + NH4(+). It carries out the reaction UTP + NH4(+) + ATP = CTP + ADP + phosphate + 2 H(+). Its pathway is pyrimidine metabolism; CTP biosynthesis via de novo pathway; CTP from UDP: step 2/2. Allosterically activated by GTP, when glutamine is the substrate; GTP has no effect on the reaction when ammonia is the substrate. The allosteric effector GTP functions by stabilizing the protein conformation that binds the tetrahedral intermediate(s) formed during glutamine hydrolysis. Inhibited by the product CTP, via allosteric rather than competitive inhibition. In terms of biological role, catalyzes the ATP-dependent amination of UTP to CTP with either L-glutamine or ammonia as the source of nitrogen. Regulates intracellular CTP levels through interactions with the four ribonucleotide triphosphates. The polypeptide is CTP synthase (Janthinobacterium sp. (strain Marseille) (Minibacterium massiliensis)).